The primary structure comprises 320 residues: Cytochrome c biogenesis protein CcsA (320 aa).

7 consecutive transmembrane segments (helical) span residues 14–34 (VLLL…WCFW), 68–88 (GHFP…ACTL), 101–121 (LVAA…SFAL), 146–166 (VIMV…AVLM), 226–246 (TITV…VWAN), 260–277 (TWAL…HTRL), and 289–309 (VASL…LLGI).

Belongs to the CcmF/CycK/Ccl1/NrfE/CcsA family. As to quaternary structure, may interact with ccs1.

Its subcellular location is the cellular thylakoid membrane. Functionally, required during biogenesis of c-type cytochromes (cytochrome c6 and cytochrome f) at the step of heme attachment. This chain is Cytochrome c biogenesis protein CcsA, found in Synechococcus sp. (strain WH7803).